Reading from the N-terminus, the 250-residue chain is 2,5-dichloro-2,5-cyclohexadiene-1,4-diol dehydrogenase (250 aa).

Position 9-34 (9-34 (IIVTGGGSGIGRATVELLVASGANVA)) interacts with NAD(+). Substrate is bound at residue Ser141. Tyr154 (proton acceptor) is an active-site residue.

It belongs to the short-chain dehydrogenases/reductases (SDR) family.

It catalyses the reaction 2,5-dichlorocyclohexa-2,5-dien-1,4-diol + NAD(+) = 2,5-dichlorohydroquinone + NADH + H(+). It functions in the pathway xenobiotic degradation; gamma-hexachlorocyclohexane degradation. Functionally, catalyzes the dehydrogenation of 2,5-dichloro-2,5-cyclohexadiene-1,4-diol (2,5-DDOL) to 2,5-dichlorohydroquinone (2,5-DCHQ), a step in the degradation of gamma-hexachlorocyclohexane (gamma-HCH or lindane). This is 2,5-dichloro-2,5-cyclohexadiene-1,4-diol dehydrogenase from Sphingobium indicum (strain DSM 16412 / CCM 7286 / MTCC 6364 / B90A).